Consider the following 174-residue polypeptide: Trypsin inhibitor BvTI (174 aa).

Cystine bridges form between Cys41–Cys84 and Cys131–Cys138.

The protein belongs to the protease inhibitor I3 (leguminous Kunitz-type inhibitor) family.

It is found in the secreted. Functionally, inhibits bovine trypsin and chymotrypsin, and human plasmin, plasma kallikrein and factor XIIa. This chain is Trypsin inhibitor BvTI, found in Bauhinia variegata (Purple orchid tree).